Reading from the N-terminus, the 557-residue chain is Selenoprotein N (557 aa).

Positions 1–21 (MAADVDKTPAGEQKDDHEDRG) are enriched in basic and acidic residues. The disordered stretch occupies residues 1–28 (MAADVDKTPAGEQKDDHEDRGTPSSRRG). Residues 35-55 (ISSLFIIAAIPVIGVCIKYYL) traverse the membrane as a helical segment. A non-standard amino acid (selenocysteine) is located at residue Sec-430. Residues Asn-451 and Asn-499 are each glycosylated (N-linked (GlcNAc...) asparagine).

In terms of assembly, interacts with ryr3.

Its subcellular location is the endoplasmic reticulum membrane. Plays an important role in cell protection against oxidative stress and in the regulation of redox-related calcium homeostasis. Regulates the calcium level of the ER by protecting the calcium pump ATP2A2 against the oxidoreductase ERO1A-mediated oxidative damage. Acts as a modulator of ryanodine receptor (RyR) activity: protects RyR from oxidation due to increased oxidative stress, or directly controls the RyR redox state, regulating the RyR-mediated calcium mobilization required for normal muscle development and differentiation. Plays an important role in muscle development and differentiation during early development. Required for development of the slow muscle fiber lineage. Required for the correct organization and attachment of the myofibrils, as well as for the continuity and integrity of the connective tissue that forms the myoseptum. This is Selenoprotein N from Danio rerio (Zebrafish).